We begin with the raw amino-acid sequence, 157 residues long: Cyclic pyranopterin monophosphate synthase (157 aa).

Substrate contacts are provided by residues 74–76 and 112–113; these read MCH and ME. D127 is a catalytic residue.

It belongs to the MoaC family. In terms of assembly, homohexamer; trimer of dimers.

It carries out the reaction (8S)-3',8-cyclo-7,8-dihydroguanosine 5'-triphosphate = cyclic pyranopterin phosphate + diphosphate. Its pathway is cofactor biosynthesis; molybdopterin biosynthesis. In terms of biological role, catalyzes the conversion of (8S)-3',8-cyclo-7,8-dihydroguanosine 5'-triphosphate to cyclic pyranopterin monophosphate (cPMP). The protein is Cyclic pyranopterin monophosphate synthase of Campylobacter jejuni (strain RM1221).